The primary structure comprises 498 residues: Probable cytosol aminopeptidase (498 aa).

Mn(2+) is bound by residues lysine 271 and aspartate 276. Lysine 283 is a catalytic residue. Mn(2+) contacts are provided by aspartate 294, aspartate 353, and glutamate 355. Residue arginine 357 is part of the active site.

Belongs to the peptidase M17 family. It depends on Mn(2+) as a cofactor.

It is found in the cytoplasm. The catalysed reaction is Release of an N-terminal amino acid, Xaa-|-Yaa-, in which Xaa is preferably Leu, but may be other amino acids including Pro although not Arg or Lys, and Yaa may be Pro. Amino acid amides and methyl esters are also readily hydrolyzed, but rates on arylamides are exceedingly low.. It catalyses the reaction Release of an N-terminal amino acid, preferentially leucine, but not glutamic or aspartic acids.. Presumably involved in the processing and regular turnover of intracellular proteins. Catalyzes the removal of unsubstituted N-terminal amino acids from various peptides. The sequence is that of Probable cytosol aminopeptidase from Bordetella petrii (strain ATCC BAA-461 / DSM 12804 / CCUG 43448).